The primary structure comprises 371 residues: Zinc transporter ZIP13 (371 aa).

Residues 1–7 (MPGCPCP) lie on the Lumenal side of the membrane. The chain crosses the membrane as a helical span at residues 8 to 28 (GCGMAGPRLLFLTALALELLE). The Cytoplasmic segment spans residues 29–68 (RAGGSQPALRSRGTATACRLDNKESESWGALLSGERLDTW). The chain crosses the membrane as a helical span at residues 69 to 89 (ICSLLGSLMVGLSGVFPLLVI). Over 90-108 (PLEMGTMLRSEAGAWRLKQ) the chain is Lumenal. The helical transmembrane segment at 109-129 (LLSFALGGLLGNVFLHLLPEA) threads the bilayer. At 130-149 (WAYTCSASPGGEGQSLQQQQ) the chain is on the cytoplasmic side. The helical transmembrane segment at 150–170 (QLGLWVIAGILTFLALEKMFL) threads the bilayer. Residues 171-235 (DSKEEGTSQA…TIDNFTHGLA (65 aa)) are Lumenal-facing. A helical membrane pass occupies residues 236 to 256 (VAASFLVSKKIGLLTTMAILL). An XEXPHE-motif motif is present at residues 257–262 (HEIPHE). Topologically, residues 257-278 (HEIPHEVGDFAILLRAGFDRWS) are cytoplasmic. A helical membrane pass occupies residues 279–299 (AAKLQLSTALGGLLGAGFAIC). Topologically, residues 300–316 (TQSPKGVVGCSPAAEET) are lumenal. A helical membrane pass occupies residues 317 to 337 (AAWVLPFTSGGFLYIALVNVL). The Cytoplasmic segment spans residues 338-349 (PDLLEEEDPWRS). The helical transmembrane segment at 350–370 (LQQLLLLCAGIVVMVLFSLFV) threads the bilayer. D371 is a topological domain (lumenal).

It belongs to the ZIP transporter (TC 2.A.5) family. Homodimer.

The protein resides in the golgi apparatus membrane. It is found in the cytoplasmic vesicle membrane. The protein localises to the endoplasmic reticulum membrane. The enzyme catalyses Zn(2+)(in) = Zn(2+)(out). Functions as a zinc transporter transporting Zn(2+) from the Golgi apparatus to the cytosol and thus influences the zinc level at least in areas of the cytosol. May regulate beige adipocyte differentiation. This chain is Zinc transporter ZIP13, found in Homo sapiens (Human).